We begin with the raw amino-acid sequence, 158 residues long: Ribosome maturation factor RimP (158 aa).

This sequence belongs to the RimP family.

Its subcellular location is the cytoplasm. In terms of biological role, required for maturation of 30S ribosomal subunits. The protein is Ribosome maturation factor RimP of Lactobacillus acidophilus (strain ATCC 700396 / NCK56 / N2 / NCFM).